Reading from the N-terminus, the 419-residue chain is Inositol-tetrakisphosphate 1-kinase (419 aa).

K18 serves as a coordination point for 1D-myo-inositol 1,3,4-trisphosphate. Positions 106 and 157 each coordinate ATP. One can recognise an ATP-grasp domain in the interval 117-334; that stretch reads EAYMKDDRIC…TGGAATEEVA (218 aa). H167 and K199 together coordinate 1D-myo-inositol 1,3,4-trisphosphate. Residues 188–199, S214, S232, and S236 each bind ATP; that span reads QNFINHNAVLYK. Residues D281, D295, and N297 each contribute to the Mg(2+) site. N297 is a 1D-myo-inositol 1,3,4-trisphosphate binding site. K388 carries the N6-acetyllysine; by EP300 and CREBBP modification. At S401 the chain carries Phosphoserine. Position 415 is an N6-acetyllysine; by EP300 and CREBBP (K415).

This sequence belongs to the ITPK1 family. In terms of assembly, monomer. Interacts with GPS1/COPS1. It depends on Mg(2+) as a cofactor. In terms of processing, acetylation by EP300 and CREBBP destabilizes ITPK1, and down-regulates enzymatic activity. Deacetylated by SIRT1.

It carries out the reaction 1D-myo-inositol 3,4,5,6-tetrakisphosphate + ATP = 1D-myo-inositol 1,3,4,5,6-pentakisphosphate + ADP + H(+). It catalyses the reaction 1D-myo-inositol 1,3,4-trisphosphate + ATP = 1D-myo-inositol 1,3,4,5-tetrakisphosphate + ADP + H(+). The catalysed reaction is 1D-myo-inositol 1,3,4-trisphosphate + ATP = 1D-myo-inositol 1,3,4,6-tetrakisphosphate + ADP + H(+). The enzyme catalyses 1D-myo-inositol 3,4,6-trisphosphate + ATP = 1D-myo-inositol 1,3,4,6-tetrakisphosphate + ADP + H(+). It carries out the reaction 1D-myo-inositol 1,3,4-trisphosphate + 1D-myo-inositol 1,3,4,5,6-pentakisphosphate = 1D-myo-inositol 3,4,5,6-tetrakisphosphate + 1D-myo-inositol 1,3,4,6-tetrakisphosphate. It catalyses the reaction 1D-myo-inositol 1,3,4-trisphosphate + 1D-myo-inositol 1,3,4,5,6-pentakisphosphate = 1D-myo-inositol 3,4,5,6-tetrakisphosphate + 1D-myo-inositol 1,3,4,5-tetrakisphosphate. Functionally, kinase that can phosphorylate various inositol polyphosphate such as Ins(3,4,5,6)P4 or Ins(1,3,4)P3. Phosphorylates Ins(3,4,5,6)P4 at position 1 to form Ins(1,3,4,5,6)P5. This reaction is thought to have regulatory importance, since Ins(3,4,5,6)P4 is an inhibitor of plasma membrane Ca(2+)-activated Cl(-) channels, while Ins(1,3,4,5,6)P5 is not. Also phosphorylates Ins(1,3,4)P3 on O-5 and O-6 to form Ins(1,3,4,6)P4, an essential molecule in the hexakisphosphate (InsP6) pathway. Also acts as an inositol polyphosphate phosphatase that dephosphorylates Ins(1,3,4,5)P4 and Ins(1,3,4,6)P4 to Ins(1,3,4)P3, and Ins(1,3,4,5,6)P5 to Ins(3,4,5,6)P4. May also act as an isomerase that interconverts the inositol tetrakisphosphate isomers Ins(1,3,4,5)P4 and Ins(1,3,4,6)P4 in the presence of ADP and magnesium. Probably acts as the rate-limiting enzyme of the InsP6 pathway. Modifies TNF-alpha-induced apoptosis by interfering with the activation of TNFRSF1A-associated death domain. Plays an important role in MLKL-mediated necroptosis. Produces highly phosphorylated inositol phosphates such as inositolhexakisphosphate (InsP6) which bind to MLKL mediating the release of an N-terminal auto-inhibitory region leading to its activation. Essential for activated phospho-MLKL to oligomerize and localize to the cell membrane during necroptosis. In Mus musculus (Mouse), this protein is Inositol-tetrakisphosphate 1-kinase.